A 1440-amino-acid polypeptide reads, in one-letter code: Genome polyprotein (1440 aa).

A propeptide spans 32-53 (ER anchor for the capsid protein C, removed in mature form by serine protease NS3); the sequence is GGNEGSIMWLASLAVVIACAGA. A helical transmembrane segment spans residues 36–56; that stretch reads GSIMWLASLAVVIACAGAMKL. Topologically, residues 57–180 are extracellular; the sequence is SNFQGKLLMT…ATRYLMKTEN (124 aa). A glycan (N-linked (GlcNAc...) asparagine; by host) is linked at Asn68. A helical membrane pass occupies residues 181–201; it reads WIVRNPGYAFLAAILGWMLGS. The Cytoplasmic portion of the chain corresponds to 202-207; that stretch reads NNGQRR. The chain crosses the membrane as a helical span at residues 208–222; the sequence is WYFTILLLLVAPAYS. Residues 223–674 lie on the Extracellular side of the membrane; the sequence is FNCLGMGNRD…QVFGGAFRTL (452 aa). 6 disulfide bridges follow: Cys225/Cys252, Cys282/Cys338, Cys282/Cys343, Cys296/Cys327, Cys314/Cys338, and Cys314/Cys343. The segment at 320–333 is fusion peptide; it reads DRGWGNGCGLFGKG. Asn376 carries an N-linked (GlcNAc...) asparagine; by host glycan. 2 disulfide bridges follow: Cys412–Cys509 and Cys526–Cys557. Residues 675–695 form a helical membrane-spanning segment; that stretch reads FGGMSWITQGLMGALLLWMGV. The Cytoplasmic portion of the chain corresponds to 696–701; the sequence is NARDRS. Residues 702-722 traverse the membrane as a helical segment; sequence IALAFLATGGVLVFLATNVHA. At 723–1147 the chain is on the extracellular side; that stretch reads DTGCAIDITR…AFAEANSGGD (425 aa). 6 disulfides stabilise this stretch: Cys726-Cys737, Cys777-Cys865, Cys901-Cys945, Cys1002-Cys1051, Cys1013-Cys1034, and Cys1035-Cys1038. Residues Asn852 and Asn929 are each glycosylated (N-linked (GlcNAc...) asparagine; by host). A helical membrane pass occupies residues 1148 to 1168; that stretch reads VLHLALIAVFKIQPAFLVMNM. Topologically, residues 1169–1178 are cytoplasmic; that stretch reads LSTRWTNQEN. Residues 1179–1199 traverse the membrane as a helical segment; it reads VVLVLGAAFFHLASVDLQIGV. His1200 is a topological domain (lumenal). A helical membrane pass occupies residues 1201-1221; it reads GILNAAAIAWMIVRAITFPTT. At 1222 to 1237 the chain is on the cytoplasmic side; the sequence is SSVTMPVLALLTPGMR. The chain crosses the membrane as a helical span at residues 1238–1258; it reads ALYLDTYRIILLVIGICSLLQ. The Lumenal segment spans residues 1259 to 1269; it reads ERKKTMAKKKG. Residues 1270-1290 traverse the membrane as a helical segment; the sequence is AVLLGLALTSTGWFSPTTIAA. Topologically, residues 1291 to 1302 are cytoplasmic; sequence GLMVCNPNKKRG. The helical transmembrane segment at 1303–1323 threads the bilayer; it reads WPATEFLSAVGLMFAIVGGLA. Topologically, residues 1324–1326 are lumenal; the sequence is ELD. Residues 1327–1347 form a helical membrane-spanning segment; that stretch reads IESMSIPFMLAGLMAVSYVVS. Residues 1348–1404 lie on the Cytoplasmic side of the membrane; it reads GKATDMWLERAADISWEMDAAITGSSRRLDVKLDDDGDFHLIDDPGVPWKVWVLRMS. The segment at 1355–1394 is interacts with and activates NS3 protease; that stretch reads LERAADISWEMDAAITGSSRRLDVKLDDDGDFHLIDDPGV. Residues 1405–1425 constitute an intramembrane region (helical); that stretch reads CIGLAALTPWAIVPAAFGYWL. Over 1426–1440 the chain is Cytoplasmic; it reads TLKTTKRGGVFWDTP.

In terms of assembly, homodimer. Interacts (via N-terminus) with host EXOC1 (via C-terminus); this interaction results in EXOC1 degradation through the proteasome degradation pathway. As to quaternary structure, forms heterodimers with envelope protein E in the endoplasmic reticulum and Golgi. Homodimer; in the endoplasmic reticulum and Golgi. Interacts with protein prM. Interacts with non-structural protein 1. In terms of assembly, homodimer; Homohexamer when secreted. Interacts with envelope protein E. NS1 interacts with NS4B. Interacts with host complement protein CFH; this interaction leads to the degradation of C3. As to quaternary structure, interacts (via N-terminus) with serine protease NS3. Forms a heterodimer with serine protease NS3. May form homooligomers. In terms of assembly, forms a heterodimer with NS2B. Interacts with non-structural protein 2A (via N-terminus). Interacts with NS4B. Interacts with unphosphorylated RNA-directed RNA polymerase NS5; this interaction stimulates RNA-directed RNA polymerase NS5 guanylyltransferase activity. Mn(2+) serves as cofactor. Mg(2+) is required as a cofactor. Post-translationally, specific enzymatic cleavages in vivo yield mature proteins. Cleavages in the lumen of endoplasmic reticulum are performed by host signal peptidase, whereas cleavages in the cytoplasmic side are performed by serine protease NS3. Signal cleavage at the 2K-4B site requires a prior NS3 protease-mediated cleavage at the 4A-2K site. In terms of processing, cleaved in post-Golgi vesicles by a host furin, releasing the mature small envelope protein M, and peptide pr. This cleavage is incomplete as up to 30% of viral particles still carry uncleaved prM. N-glycosylated. Post-translationally, N-glycosylated. The excreted form is glycosylated and this is required for efficient secretion of the protein from infected cells. In terms of processing, RNA-directed RNA polymerase NS5: Phosphorylated on serines residues. This phosphorylation may trigger NS5 nuclear localization.

The protein resides in the virion. It localises to the host nucleus. Its subcellular location is the host cytoplasm. It is found in the host perinuclear region. The protein localises to the secreted. The protein resides in the virion membrane. It localises to the host endoplasmic reticulum membrane. The enzyme catalyses Selective hydrolysis of -Xaa-Xaa-|-Yaa- bonds in which each of the Xaa can be either Arg or Lys and Yaa can be either Ser or Ala.. It carries out the reaction a ribonucleoside 5'-triphosphate + H2O = a ribonucleoside 5'-diphosphate + phosphate + H(+). The catalysed reaction is ATP + H2O = ADP + phosphate + H(+). Plays a role in virus budding by binding to the cell membrane and gathering the viral RNA into a nucleocapsid that forms the core of a mature virus particle. During virus entry, may induce genome penetration into the host cytoplasm after hemifusion induced by the surface proteins. Can migrate to the cell nucleus where it modulates host functions. Overcomes the anti-viral effects of host EXOC1 by sequestering and degrading the latter through the proteasome degradation pathway. Functionally, inhibits RNA silencing by interfering with host Dicer. In terms of biological role, prevents premature fusion activity of envelope proteins in trans-Golgi by binding to envelope protein E at pH 6.0. After virion release in extracellular space, gets dissociated from E dimers. Its function is as follows. Acts as a chaperone for envelope protein E during intracellular virion assembly by masking and inactivating envelope protein E fusion peptide. prM is the only viral peptide matured by host furin in the trans-Golgi network probably to avoid catastrophic activation of the viral fusion activity in acidic Golgi compartment prior to virion release. prM-E cleavage is inefficient, and many virions are only partially matured. These uncleaved prM would play a role in immune evasion. May play a role in virus budding. Exerts cytotoxic effects by activating a mitochondrial apoptotic pathway through M ectodomain. May display a viroporin activity. Functionally, binds to host cell surface receptor and mediates fusion between viral and cellular membranes. Envelope protein is synthesized in the endoplasmic reticulum in the form of heterodimer with protein prM. They play a role in virion budding in the ER, and the newly formed immature particle is covered with 60 spikes composed of heterodimer between precursor prM and envelope protein E. The virion is transported to the Golgi apparatus where the low pH causes dissociation of PrM-E heterodimers and formation of E homodimers. prM-E cleavage is inefficient, and many virions are only partially matured. These uncleaved prM would play a role in immune evasion. In terms of biological role, involved in immune evasion, pathogenesis and viral replication. Once cleaved off the polyprotein, is targeted to three destinations: the viral replication cycle, the plasma membrane and the extracellular compartment. Essential for viral replication. Required for formation of the replication complex and recruitment of other non-structural proteins to the ER-derived membrane structures. Excreted as a hexameric lipoparticle that plays a role against host immune response. Antagonizing the complement function. Binds to the host macrophages and dendritic cells. Inhibits signal transduction originating from Toll-like receptor 3 (TLR3). Its function is as follows. Component of the viral RNA replication complex that functions in virion assembly and antagonizes the host alpha/beta interferon antiviral response. Required cofactor for the serine protease function of NS3. May have membrane-destabilizing activity and form viroporins. Functionally, displays three enzymatic activities: serine protease, NTPase and RNA helicase. NS3 serine protease, in association with NS2B, performs its autocleavage and cleaves the polyprotein at dibasic sites in the cytoplasm: C-prM, NS2A-NS2B, NS2B-NS3, NS3-NS4A, NS4A-2K and NS4B-NS5. NS3 RNA helicase binds RNA and unwinds dsRNA in the 3' to 5' direction. In terms of biological role, non-structural protein 4A: Regulates the ATPase activity of the NS3 helicase activity. NS4A allows NS3 helicase to conserve energy during unwinding. Its function is as follows. Peptide 2k: Functions as a signal peptide for NS4B and is required for the interferon antagonism activity of the latter. Non-structural protein 4B: Induces the formation of ER-derived membrane vesicles where the viral replication takes place. Inhibits interferon (IFN)-induced host STAT1 phosphorylation and nuclear translocation, thereby preventing the establishment of cellular antiviral state by blocking the IFN-alpha/beta pathway. Inhibits STAT2 translocation in the nucleus after IFN-alpha treatment. Functionally, RNA-directed RNA polymerase NS5: Replicates the viral (+) and (-) RNA genome. Performs the capping of genomes in the cytoplasm. NS5 methylates viral RNA cap at guanine N-7 and ribose 2'-O positions. Besides its role in RNA genome replication, also prevents the establishment of cellular antiviral state by blocking the interferon-alpha/beta (IFN-alpha/beta) signaling pathway. Inhibits host TYK2 and STAT2 phosphorylation, thereby preventing activation of JAK-STAT signaling pathway. This Japanese encephalitis virus (strain Nakayama) (JEV) protein is Genome polyprotein.